A 710-amino-acid polypeptide reads, in one-letter code: Dihydroxyacetone synthase (710 aa).

Residues histidine 78 and 128-130 (GPL) contribute to the thiamine diphosphate site. Mg(2+) contacts are provided by aspartate 169, asparagine 199, and valine 201. Asparagine 199 contributes to the thiamine diphosphate binding site. Residues histidine 275, glutamate 433, and phenylalanine 461 each coordinate thiamine diphosphate. Glutamate 433 (proton donor) is an active-site residue. The Microbody targeting signal motif lies at 708-710 (NKL).

Belongs to the transketolase family. It depends on Mg(2+) as a cofactor. The cofactor is Ca(2+). Mn(2+) is required as a cofactor. Co(2+) serves as cofactor. Requires thiamine diphosphate as cofactor.

The protein localises to the peroxisome. It carries out the reaction D-xylulose 5-phosphate + formaldehyde = dihydroxyacetone + D-glyceraldehyde 3-phosphate. Its function is as follows. This is the major methanol assimilatory enzyme from the methylotrophic Hansenula polymorpha. The sequence is that of Dihydroxyacetone synthase (DAS) from Pichia angusta (Yeast).